Reading from the N-terminus, the 363-residue chain is N-acetylmuramate/N-acetylglucosamine kinase (363 aa).

This sequence belongs to the kinase AmgK family.

It carries out the reaction N-acetyl-D-muramate + ATP = N-acetyl-alpha-D-muramate 1-phosphate + ADP + H(+). It catalyses the reaction N-acetyl-D-glucosamine + ATP = N-acetyl-alpha-D-glucosamine 1-phosphate + ADP + H(+). Its pathway is cell wall biogenesis; peptidoglycan recycling. In terms of biological role, sugar kinase that catalyzes the ATP-dependent phosphorylation of N-acetylmuramate (MurNAc) and N-acetylglucosamine (GlcNAc) at its C1 hydroxyl group, leading to MurNAc alpha-1P and GlcNAc alpha-1P, respectively. Is likely involved in peptidoglycan recycling as part of a cell wall recycling pathway that bypasses de novo biosynthesis of the peptidoglycan precursor UDP-MurNAc. Is able to complement the fosfomycin sensitivity phenotype of a P.putida mutant lacking amgK. The polypeptide is N-acetylmuramate/N-acetylglucosamine kinase (Caulobacter vibrioides (strain ATCC 19089 / CIP 103742 / CB 15) (Caulobacter crescentus)).